A 142-amino-acid chain; its full sequence is Hemoglobin subunit alpha-A (142 aa).

One can recognise a Globin domain in the interval 2-142 (VLSANDKTNV…VGNVLTAKYR (141 aa)). His-59 provides a ligand contact to O2. Position 88 (His-88) interacts with heme b.

Belongs to the globin family. In terms of assembly, heterotetramer of two alpha chains and two beta chains. In terms of tissue distribution, red blood cells.

Involved in oxygen transport from the lung to the various peripheral tissues. The sequence is that of Hemoglobin subunit alpha-A (HBAA) from Aegypius monachus (Cinereous vulture).